The sequence spans 417 residues: Serine hydroxymethyltransferase (417 aa).

(6S)-5,6,7,8-tetrahydrofolate contacts are provided by residues Leu121 and 125–127 (GHL). Residue Lys229 is modified to N6-(pyridoxal phosphate)lysine. 355 to 357 (SPF) serves as a coordination point for (6S)-5,6,7,8-tetrahydrofolate.

Belongs to the SHMT family. As to quaternary structure, homodimer. Pyridoxal 5'-phosphate is required as a cofactor.

It localises to the cytoplasm. The catalysed reaction is (6R)-5,10-methylene-5,6,7,8-tetrahydrofolate + glycine + H2O = (6S)-5,6,7,8-tetrahydrofolate + L-serine. The protein operates within one-carbon metabolism; tetrahydrofolate interconversion. Its pathway is amino-acid biosynthesis; glycine biosynthesis; glycine from L-serine: step 1/1. In terms of biological role, catalyzes the reversible interconversion of serine and glycine with tetrahydrofolate (THF) serving as the one-carbon carrier. This reaction serves as the major source of one-carbon groups required for the biosynthesis of purines, thymidylate, methionine, and other important biomolecules. Also exhibits THF-independent aldolase activity toward beta-hydroxyamino acids, producing glycine and aldehydes, via a retro-aldol mechanism. This Xylella fastidiosa (strain M23) protein is Serine hydroxymethyltransferase.